A 223-amino-acid polypeptide reads, in one-letter code: Ribonuclease HII (223 aa).

The region spanning 32-223 (FHIAGVDEVG…LKGRFRDNMS (192 aa)) is the RNase H type-2 domain. 3 residues coordinate a divalent metal cation: D38, E39, and D130.

This sequence belongs to the RNase HII family. It depends on Mn(2+) as a cofactor. Mg(2+) serves as cofactor.

The protein localises to the cytoplasm. The enzyme catalyses Endonucleolytic cleavage to 5'-phosphomonoester.. Its function is as follows. Endonuclease that specifically degrades the RNA of RNA-DNA hybrids. This Bartonella quintana (strain Toulouse) (Rochalimaea quintana) protein is Ribonuclease HII.